Here is a 132-residue protein sequence, read N- to C-terminus: Large ribosomal subunit protein eL28 (132 aa).

This sequence belongs to the eukaryotic ribosomal protein eL28 family.

The protein is Large ribosomal subunit protein eL28 (rpl28) of Dictyostelium discoideum (Social amoeba).